We begin with the raw amino-acid sequence, 1031 residues long: Error-prone DNA polymerase (1031 aa).

The protein belongs to the DNA polymerase type-C family. DnaE2 subfamily.

It is found in the cytoplasm. It catalyses the reaction DNA(n) + a 2'-deoxyribonucleoside 5'-triphosphate = DNA(n+1) + diphosphate. Functionally, DNA polymerase involved in damage-induced mutagenesis and translesion synthesis (TLS). It is not the major replicative DNA polymerase. In Pseudomonas syringae pv. tomato (strain ATCC BAA-871 / DC3000), this protein is Error-prone DNA polymerase.